The chain runs to 216 residues: Nucleoside triphosphate pyrophosphatase (216 aa).

Aspartate 82 (proton acceptor) is an active-site residue.

It belongs to the Maf family. Requires a divalent metal cation as cofactor.

Its subcellular location is the cytoplasm. It carries out the reaction a ribonucleoside 5'-triphosphate + H2O = a ribonucleoside 5'-phosphate + diphosphate + H(+). The enzyme catalyses a 2'-deoxyribonucleoside 5'-triphosphate + H2O = a 2'-deoxyribonucleoside 5'-phosphate + diphosphate + H(+). In terms of biological role, nucleoside triphosphate pyrophosphatase. May have a dual role in cell division arrest and in preventing the incorporation of modified nucleotides into cellular nucleic acids. The polypeptide is Nucleoside triphosphate pyrophosphatase (Mycobacterium ulcerans (strain Agy99)).